Here is a 256-residue protein sequence, read N- to C-terminus: Omega-amidase YafV (256 aa).

Positions 4–234 (LKITLLQQPL…ATRIDAELSM (231 aa)) constitute a CN hydrolase domain. Glutamate 42 acts as the Proton acceptor in catalysis. Residue lysine 107 is part of the active site. Cysteine 141 (nucleophile) is an active-site residue.

It belongs to the carbon-nitrogen hydrolase superfamily. NIT1/NIT2 family.

The enzyme catalyses a monoamide of a dicarboxylate + H2O = a dicarboxylate + NH4(+). Functionally, hydrolyzes alpha-ketoglutaramate (a-KGM) to alpha-ketoglutarate (alpha-KG) and ammonia (specific activity 6.65 umol/min/mg), has weak activity on L-glutamine, almost no activity on deaminated glutathione (dGSH) and none on glutathione. May function as a metabolite repair enzyme. The polypeptide is Omega-amidase YafV (yafV) (Escherichia coli (strain B / BL21-DE3)).